Consider the following 338-residue polypeptide: UDP-glucose 4-epimerase (338 aa).

Residues 11-12, 31-36, 58-59, 80-84, asparagine 99, serine 124, tyrosine 149, lysine 153, and phenylalanine 178 contribute to the NAD(+) site; these read YI, DNLCNS, DI, and FAGLK. Residues serine 124 and tyrosine 149 each contribute to the substrate site. The Proton acceptor role is filled by tyrosine 149. Substrate is bound by residues asparagine 179, 199 to 200, 216 to 218, arginine 231, and 292 to 295; these read NL, SVF, and RSGD.

It belongs to the NAD(P)-dependent epimerase/dehydratase family. As to quaternary structure, homodimer. NAD(+) serves as cofactor.

It catalyses the reaction UDP-alpha-D-glucose = UDP-alpha-D-galactose. It functions in the pathway carbohydrate metabolism; galactose metabolism. Functionally, involved in the metabolism of galactose. Catalyzes the conversion of UDP-galactose (UDP-Gal) to UDP-glucose (UDP-Glc) through a mechanism involving the transient reduction of NAD. By controlling the internal galactose concentration, it may be linked to the biosynthesis of lipopolysaccharide surface molecules, which are important for the pathogenesis of H.influenzae. This Haemophilus influenzae (strain ATCC 51907 / DSM 11121 / KW20 / Rd) protein is UDP-glucose 4-epimerase (galE).